The primary structure comprises 156 residues: MKHNDKQEKLAKAFKALLKEERFGSQAEIVTALQEMGFENINQSKVSRMLSRFGAVRTRNAKMEMVYCLPVELGVPTTSSPLKNLVLDVDHNGALVVIHTSPGAAQLIARLLDSLGKAEGILGTIAGDDTIFITPTSDTDIEELYLSALELFEQTP.

The protein belongs to the ArgR family.

The protein localises to the cytoplasm. The protein operates within amino-acid biosynthesis; L-arginine biosynthesis [regulation]. Functionally, regulates arginine biosynthesis genes. The sequence is that of Arginine repressor from Aeromonas hydrophila subsp. hydrophila (strain ATCC 7966 / DSM 30187 / BCRC 13018 / CCUG 14551 / JCM 1027 / KCTC 2358 / NCIMB 9240 / NCTC 8049).